The primary structure comprises 78 residues: RNA-binding protein Hfq (78 aa).

Residues 10-69 (DPFLNTLRKEHVPVSIYLVNGIKLQGQIESFDQYVVLLRNTVTQMVYKHAISTVVPARAV) form the Sm domain.

This sequence belongs to the Hfq family. Homohexamer.

Its function is as follows. RNA chaperone that binds small regulatory RNA (sRNAs) and mRNAs to facilitate mRNA translational regulation in response to envelope stress, environmental stress and changes in metabolite concentrations. Also binds with high specificity to tRNAs. This Bordetella avium (strain 197N) protein is RNA-binding protein Hfq.